The primary structure comprises 652 residues: Interferon-induced GTP-binding protein Mx1 (652 aa).

A disordered region spans residues 1-27; that stretch reads MKERTSACRHGTPQKHPDTSEESQAME. Positions 58–331 constitute a Dynamin-type G domain; it reads DLALPAIAVI…LTSHICKSLP (274 aa). The tract at residues 68-75 is G1 motif; sequence GDQSSGKS. Residue 68 to 75 participates in GTP binding; that stretch reads GDQSSGKS. The G2 motif stretch occupies residues 93-95; it reads VTR. The G3 motif stretch occupies residues 169 to 172; the sequence is DLPG. Residues 169-173 and 238-241 each bind GTP; these read DLPGI and TKPD. Positions 238 to 241 are G4 motif; the sequence is TKPD. A G5 motif region spans residues 270 to 273; that stretch reads KCRG. Residues 332 to 357 are bundle signaling element (BSE); sequence ILENQINVNHQIASEELQKYGADIPE. Residues 357–526 are middle domain; sequence EDDSKRLSFL…HFQMEHIVYC (170 aa). Positions 358–622 are stalk; the sequence is DDSKRLSFLM…TSKCNWFLTE (265 aa). One can recognise a GED domain in the interval 564–652; it reads TTEMTQHLNA…AQRKLAKFSN (89 aa).

It belongs to the TRAFAC class dynamin-like GTPase superfamily. Dynamin/Fzo/YdjA family. In terms of assembly, homooligomer. Oligomerizes into multimeric filamentous or ring-like structures by virtue of its stalk domain. Oligomerization is critical for GTPase activity, protein stability, and recognition of viral target structures. Interacts with TRPC1, TRPC3, TRPC4, TRPC5, TRPC6 and TRPC7. Interacts with HSPA5. Interacts with TUBB/TUBB5. Interacts with DDX39A and DDX39B. ISGylated.

The protein localises to the nucleus. Its subcellular location is the cytoplasm. It localises to the endoplasmic reticulum membrane. It is found in the perinuclear region. In terms of biological role, interferon-induced dynamin-like GTPase which has antiviral activity against influenza A virus, (IAV) and Thogoto virus (THOV). Inhibits IAV by interfering with the process of primary transcription, probably by affecting the viral polymerase function. The protein is Interferon-induced GTP-binding protein Mx1 (Mx1) of Rattus norvegicus (Rat).